The sequence spans 815 residues: Lon protease 2 (815 aa).

Residues Leu19 to Ile212 enclose the Lon N-terminal domain. Gly365 to Thr372 is a binding site for ATP. Positions Arg601–Ser782 constitute a Lon proteolytic domain. Active-site residues include Ser688 and Lys731.

Belongs to the peptidase S16 family. Homohexamer. Organized in a ring with a central cavity.

The protein localises to the cytoplasm. The enzyme catalyses Hydrolysis of proteins in presence of ATP.. In terms of biological role, ATP-dependent serine protease that mediates the selective degradation of mutant and abnormal proteins as well as certain short-lived regulatory proteins. Required for cellular homeostasis and for survival from DNA damage and developmental changes induced by stress. Degrades polypeptides processively to yield small peptide fragments that are 5 to 10 amino acids long. Binds to DNA in a double-stranded, site-specific manner. This is Lon protease 2 from Herpetosiphon aurantiacus (strain ATCC 23779 / DSM 785 / 114-95).